The following is a 264-amino-acid chain: Phosphonoacetaldehyde hydrolase (264 aa).

Catalysis depends on D9, which acts as the Nucleophile. The Mg(2+) site is built by D9 and A11. Catalysis depends on K50, which acts as the Schiff-base intermediate with substrate. D183 provides a ligand contact to Mg(2+).

Belongs to the HAD-like hydrolase superfamily. PhnX family. Homodimer. Mg(2+) serves as cofactor.

It carries out the reaction phosphonoacetaldehyde + H2O = acetaldehyde + phosphate + H(+). Involved in phosphonate degradation. The sequence is that of Phosphonoacetaldehyde hydrolase from Bacillus cytotoxicus (strain DSM 22905 / CIP 110041 / 391-98 / NVH 391-98).